Here is a 355-residue protein sequence, read N- to C-terminus: Guanine nucleotide-binding protein G(o) subunit alpha (355 aa).

Residues 1-17 (MGCASSAEERAAPSAQQ) are compositionally biased toward low complexity. The tract at residues 1 to 24 (MGCASSAEERAAPSAQQADREKLK) is disordered. Gly-2 carries N-myristoyl glycine lipidation. The S-palmitoyl cysteine moiety is linked to residue Cys-3. The G-alpha domain occupies 32-355 (KDIKLLLLGA…ANNLRGCGLY (324 aa)). Residues 35 to 48 (KLLLLGAGESGKST) are G1 motif. Residues 40–47 (GAGESGKS), 176–182 (LRTRVKT), 201–205 (DVGRG), 201–206 (DVGRGQ), 271–274 (NKKD), and Ala-327 each bind GTP. Mg(2+) contacts are provided by Ser-47 and Thr-182. Positions 174–182 (DILRTRVKT) are G2 motif. Residues 197–206 (FKLFDVGRGQ) are G3 motif. Positions 267 to 274 (ILFLNKKD) are G4 motif. Residues 326–330 (TATDT) form a G5 motif region.

The protein belongs to the G-alpha family. G(i/o/t/z) subfamily. As to quaternary structure, g proteins are composed of 3 units; alpha, beta and gamma. The alpha chain contains the guanine nucleotide binding site.

In terms of biological role, guanine nucleotide-binding proteins (G proteins) are involved as modulators or transducers in various transmembrane signaling systems. The G(o) protein function is not clear. The sequence is that of Guanine nucleotide-binding protein G(o) subunit alpha from Manduca sexta (Tobacco hawkmoth).